The primary structure comprises 199 residues: 3-isopropylmalate dehydratase small subunit (199 aa).

This sequence belongs to the LeuD family. LeuD type 1 subfamily. In terms of assembly, heterodimer of LeuC and LeuD.

It catalyses the reaction (2R,3S)-3-isopropylmalate = (2S)-2-isopropylmalate. It participates in amino-acid biosynthesis; L-leucine biosynthesis; L-leucine from 3-methyl-2-oxobutanoate: step 2/4. In terms of biological role, catalyzes the isomerization between 2-isopropylmalate and 3-isopropylmalate, via the formation of 2-isopropylmaleate. The sequence is that of 3-isopropylmalate dehydratase small subunit from Bacillus pumilus (strain SAFR-032).